We begin with the raw amino-acid sequence, 491 residues long: Katanin p60 ATPase-containing subunit A1 (491 aa).

Residues 1–29 form an interaction with KATNB1 region; that stretch reads MSLLMISENVKLAREYALLGNYDSAMVYY. The tract at residues 1–75 is interaction with dynein and NDEL1; sequence MSLLMISENV…VKDIMKTLES (75 aa). An interaction with microtubules region spans residues 1–185; the sequence is MSLLMISENV…EPETNKFDST (185 aa). Phosphoserine; by DYRK2 is present on residues Ser42 and Ser109. Residues 87–185 form a disordered region; sequence QHDLPASEGE…EPETNKFDST (99 aa). Residues 117-144 are compositionally biased toward polar residues; it reads SSQYSDPKSHGNRPSTTVRVHRSSAQNV. The residue at position 133 (Thr133) is a Phosphothreonine; by DYRK2. Residues 145-169 are compositionally biased toward basic and acidic residues; sequence HNDRGKAVRCREKKEQNKGREEKNK. Ser170 is subject to Phosphoserine. 249-256 is a binding site for ATP; sequence GPPGTGKT.

The protein belongs to the AAA ATPase family. Katanin p60 subunit A1 subfamily. As to quaternary structure, can homooligomerize into hexameric rings, which may be promoted by interaction with microtubules. Interacts with KATNB1, which may serve as a targeting subunit. Interacts with ASPM; the katanin complex formation KATNA1:KATNB1 is required for the association of ASPM. Interacts with dynein and NDEL1. Associates with the E3 ligase complex containing DYRK2, EDD/UBR5, DDB1 and DCAF1 proteins (EDVP complex). Interacts with KLHL42 (via the kelch domains). Interacts with CUL3; the interaction is enhanced by KLHL42. Interacts with KATNB1 and KATNBL1. Interacts with CAMSAP2 and CAMSAP3; leading to regulate the length of CAMSAP-decorated microtubule stretches. Post-translationally, phosphorylation by DYRK2 triggers ubiquitination and subsequent degradation. In terms of processing, ubiquitinated by the BCR(KLHL42) E3 ubiquitin ligase complex, leading to its proteasomal degradation. Ubiquitinated by the EDVP E3 ligase complex and subsequently targeted for proteasomal degradation.

The protein localises to the cytoplasm. It localises to the midbody. It is found in the cytoskeleton. Its subcellular location is the microtubule organizing center. The protein resides in the centrosome. The protein localises to the spindle pole. It localises to the spindle. It carries out the reaction n ATP + n H2O + a microtubule = n ADP + n phosphate + (n+1) alpha/beta tubulin heterodimers.. ATPase activity is stimulated by microtubules, which promote homooligomerization. ATP-dependent microtubule severing is stimulated by interaction with KATNB1. Catalytic subunit of a complex which severs microtubules in an ATP-dependent manner. Microtubule severing may promote rapid reorganization of cellular microtubule arrays and the release of microtubules from the centrosome following nucleation. Microtubule release from the mitotic spindle poles may allow depolymerization of the microtubule end proximal to the spindle pole, leading to poleward microtubule flux and poleward motion of chromosome. Microtubule release within the cell body of neurons may be required for their transport into neuronal processes by microtubule-dependent motor proteins. This transport is required for axonal growth. This is Katanin p60 ATPase-containing subunit A1 from Homo sapiens (Human).